Reading from the N-terminus, the 79-residue chain is Neurotoxin 3FTx-LI (79 aa).

The N-terminal stretch at 1 to 21 (MKTLLLTLVVVTIVCLDLGYT) is a signal peptide. Disulfide bonds link cysteine 24–cysteine 43, cysteine 36–cysteine 61, cysteine 65–cysteine 71, and cysteine 72–cysteine 77.

As to expression, expressed by the venom gland.

It localises to the secreted. Functionally, blocks both the muscle-twitch response to nerve stimulation and the response to exogenous acetylcholine. This chain is Neurotoxin 3FTx-LI, found in Bungarus fasciatus (Banded krait).